A 179-amino-acid chain; its full sequence is Large ribosomal subunit protein uL6 (179 aa).

It belongs to the universal ribosomal protein uL6 family. Part of the 50S ribosomal subunit.

In terms of biological role, this protein binds to the 23S rRNA, and is important in its secondary structure. It is located near the subunit interface in the base of the L7/L12 stalk, and near the tRNA binding site of the peptidyltransferase center. This is Large ribosomal subunit protein uL6 from Gloeothece citriformis (strain PCC 7424) (Cyanothece sp. (strain PCC 7424)).